Here is a 314-residue protein sequence, read N- to C-terminus: MPIKLDNKLPALDVLRSENVFIMDENRASSQDIRPMEVLILNLMPTKEVTETQLLRLLANTPLQINVEFLYMASHKSKNTHAEHMETFYKTFDEIKDKYYDGLIVTGAPVEQMPFEEVDYWQELTRVFDWSKKHVYSTLHLCWGAQAGLYYKHGVDKVPLSEKLSGIYKQTVDMPENFLMNGFDDSFVSPHSRYTEVTLEDIKNKTDLDVVASGQEVGLSILASKDLREVYSFGHFEYDRDTLAREYRRDLEVGINPDVPANYFPGDDPSQEPKLRWNLAASTFFSNWINYAVYQETPYRLEELEDDFSFYGYL.

Cys-142 (acyl-thioester intermediate) is an active-site residue. Substrate contacts are provided by Lys-163 and Ser-192. His-235 functions as the Proton acceptor in the catalytic mechanism. The active site involves Glu-237. Residue Arg-249 coordinates substrate.

Belongs to the MetA family.

The protein resides in the cytoplasm. The enzyme catalyses L-homoserine + acetyl-CoA = O-acetyl-L-homoserine + CoA. It functions in the pathway amino-acid biosynthesis; L-methionine biosynthesis via de novo pathway; O-acetyl-L-homoserine from L-homoserine: step 1/1. In terms of biological role, transfers an acetyl group from acetyl-CoA to L-homoserine, forming acetyl-L-homoserine. This Streptococcus thermophilus (strain ATCC BAA-491 / LMD-9) protein is Homoserine O-acetyltransferase.